We begin with the raw amino-acid sequence, 466 residues long: Bifunctional protein GlmU (466 aa).

The tract at residues 1–236 (MEVMPQPLTI…PAEALGINDR (236 aa)) is pyrophosphorylase. UDP-N-acetyl-alpha-D-glucosamine-binding positions include 13–16 (LAAG), lysine 27, glutamine 79, 84–85 (GT), 107–109 (YGD), glycine 146, glutamate 161, asparagine 176, and asparagine 234. Aspartate 109 is a binding site for Mg(2+). Asparagine 234 contributes to the Mg(2+) binding site. The interval 237–257 (AQLAEVDRIFRDRKRRAVMAA) is linker. Residues 258 to 466 (GVTLIQPETI…AKKRRKLAKT (209 aa)) are N-acetyltransferase. UDP-N-acetyl-alpha-D-glucosamine-binding residues include arginine 340 and lysine 358. Histidine 370 acts as the Proton acceptor in catalysis. UDP-N-acetyl-alpha-D-glucosamine-binding residues include tyrosine 373 and asparagine 384. Acetyl-CoA is bound by residues alanine 387, 393–394 (NY), serine 412, alanine 430, and arginine 447.

It in the N-terminal section; belongs to the N-acetylglucosamine-1-phosphate uridyltransferase family. This sequence in the C-terminal section; belongs to the transferase hexapeptide repeat family. Homotrimer. Mg(2+) serves as cofactor.

It is found in the cytoplasm. It carries out the reaction alpha-D-glucosamine 1-phosphate + acetyl-CoA = N-acetyl-alpha-D-glucosamine 1-phosphate + CoA + H(+). It catalyses the reaction N-acetyl-alpha-D-glucosamine 1-phosphate + UTP + H(+) = UDP-N-acetyl-alpha-D-glucosamine + diphosphate. The protein operates within nucleotide-sugar biosynthesis; UDP-N-acetyl-alpha-D-glucosamine biosynthesis; N-acetyl-alpha-D-glucosamine 1-phosphate from alpha-D-glucosamine 6-phosphate (route II): step 2/2. It functions in the pathway nucleotide-sugar biosynthesis; UDP-N-acetyl-alpha-D-glucosamine biosynthesis; UDP-N-acetyl-alpha-D-glucosamine from N-acetyl-alpha-D-glucosamine 1-phosphate: step 1/1. It participates in bacterial outer membrane biogenesis; LPS lipid A biosynthesis. Catalyzes the last two sequential reactions in the de novo biosynthetic pathway for UDP-N-acetylglucosamine (UDP-GlcNAc). The C-terminal domain catalyzes the transfer of acetyl group from acetyl coenzyme A to glucosamine-1-phosphate (GlcN-1-P) to produce N-acetylglucosamine-1-phosphate (GlcNAc-1-P), which is converted into UDP-GlcNAc by the transfer of uridine 5-monophosphate (from uridine 5-triphosphate), a reaction catalyzed by the N-terminal domain. In Solibacter usitatus (strain Ellin6076), this protein is Bifunctional protein GlmU.